The chain runs to 189 residues: Cancer/testis antigen family 45 member A1 (189 aa).

The span at 1-23 (MTDKTEKVAVDPETVFKRPRECD) shows a compositional bias: basic and acidic residues. Disordered regions lie at residues 1 to 27 (MTDK…SPSY) and 83 to 118 (RMMQ…SPKS).

It belongs to the CT45 family. In terms of tissue distribution, testis specific. Expressed in cancer cell lines.

The protein resides in the nucleus. The polypeptide is Cancer/testis antigen family 45 member A1 (Homo sapiens (Human)).